The following is a 391-amino-acid chain: Nucleosome assembly protein 1-like 1 (391 aa).

N-acetylmethionine is present on M1. Residues 1-10 are compositionally biased toward basic and acidic residues; sequence MADIDNKEQS. A disordered region spans residues 1-32; it reads MADIDNKEQSELDQDLDDVEEVEEEETGEETK. Residue A2 is modified to N-acetylalanine. At S10 the chain carries Phosphoserine. The span at 11–28 shows a compositional bias: acidic residues; sequence ELDQDLDDVEEVEEEETG. Residues T62 and T64 each carry the phosphothreonine modification. Residue S69 is modified to Phosphoserine. K116 carries the N6-acetyllysine modification. An NAP1L motif motif is present at residues 125 to 150; the sequence is YEPTEEECEWKPDEEDEISEELKEKA. Acidic residues predominate over residues 132–143; sequence CEWKPDEEDEIS. Residues 132-163 are disordered; sequence CEWKPDEEDEISEELKEKAKIEDEKKDEEKED. S143 is modified (phosphoserine). Positions 144–163 are enriched in basic and acidic residues; it reads EELKEKAKIEDEKKDEEKED. Residues 273–279 carry the Nuclear localization signal motif; sequence IKKKQKH. Over residues 346 to 376 the composition is skewed to acidic residues; sequence AIEDDDDDYDEEGEEADEEGEEEGDEENDPD. A disordered region spans residues 346 to 391; it reads AIEDDDDDYDEEGEEADEEGEEEGDEENDPDYDPKKDQNPAECKQQ. A compositionally biased stretch (basic and acidic residues) spans 377 to 391; sequence YDPKKDQNPAECKQQ. Cysteine methyl ester is present on C388. C388 is lipidated: S-farnesyl cysteine. A propeptide spans 389–391 (removed in mature form); it reads KQQ.

Belongs to the nucleosome assembly protein (NAP) family. As to quaternary structure, homodimer. The dimer binds strongly and sequentially to single and double H2A-H2B heterodimers. Interacts with ERCC6; this interaction increases ERCC6 processivity. Interacts with RAD54. Interacts with SETD1A. In terms of assembly, (Microbial infection) Interacts with human herpesvirus 8 protein LANA1 (via N-terminus); this interaction is required for LANA1-dependent DNA replication. (Microbial infection) Interacts with hepatitis virus protein NS5A (via C-terminus); this interaction sequesters NAP1L1 in the cytoplasm, blocking its nuclear translocation. As to quaternary structure, (Microbial infection) Interacts with Chikungunya virus non-structural protein 3 (via C-terminus). Monoglycylated on glutamate residues. Cannot be polyglycylated due to the absence of functional TTLL10 in human. Post-translationally, polyglutamylated by TTLL4 on glutamate residues, resulting in polyglutamate chains on the gamma-carboxyl group. Both polyglutamylation and monoglycylation modifications can coexist on the same protein on adjacent residues, and lowering polyglycylation levels increases polyglutamylation, and reciprocally. Ubiquitously expressed.

The protein resides in the nucleus. The protein localises to the melanosome. Its subcellular location is the cytoplasm. Its function is as follows. Histone chaperone that plays a role in the nuclear import of H2A-H2B and nucleosome assembly. Also participates in several important DNA repair mechanisms: greatly enhances ERCC6-mediated chromatin remodeling which is essential for transcription-coupled nucleotide excision DNA repair. Also stimulates homologous recombination (HR) by RAD51 and RAD54 which is essential in mitotic DNA double strand break (DSB) repair. Plays a key role in the regulation of embryonic neurogenesis. Promotes the proliferation of neural progenitors and inhibits neuronal differentiation during cortical development. Regulates neurogenesis via the modulation of RASSF10; regulates RASSF10 expression by promoting SETD1A-mediated H3K4 methylation at the RASSF10 promoter. (Microbial infection) Positively regulates Epstein-Barr virus reactivation in epithelial cells through the induction of viral BZLF1 expression. Functionally, (Microbial infection) Together with human herpesvirus 8 protein LANA1, assists the proper assembly of the nucleosome on the replicated viral DNA. This is Nucleosome assembly protein 1-like 1 (NAP1L1) from Homo sapiens (Human).